A 195-amino-acid polypeptide reads, in one-letter code: Large ribosomal subunit protein bL32m (195 aa).

Cys95, Cys98, Cys108, and Cys111 together coordinate Zn(2+).

It belongs to the bacterial ribosomal protein bL32 family. In terms of assembly, component of the mitochondrial large ribosomal subunit (mt-LSU).

It localises to the mitochondrion. In terms of biological role, component of the mitochondrial large ribosomal subunit (mt-LSU). The mitochondrial ribosome (mitoribosome) is a large ribonucleoprotein complex responsible for the synthesis of proteins inside mitochondria. The sequence is that of Large ribosomal subunit protein bL32m (mRpL32) from Drosophila melanogaster (Fruit fly).